The sequence spans 632 residues: MMSQTFFLISDPDNLDYPIYTVHDKSRILDCFCDISLFKTTTITEIELDNEHPDFKILKLYGNTFMTNRIIKNTKYSLLDVNTVQMLLDYGDPDYEFKSTHYLYVFYMSQNRFDICDYLIASNIKFVGTYTKSCLLNQNTLTNYHLFKYIINNSEFFGCCHYDLMYAAFRYTKFYDLCDHLIKSEYNCNIDYDNFLRQLFNKTDSNGFTINCELDTFQIKKLIDENYFDNEKLFYTVLYDSFELTKYIVEKGFYYDFDSVINSDINLEMLKFFIELGNNLTDDHIMILLSKKYSNDYCKKITFLLDNNYITEKHFTNKIVSDIVWFDLNLLDYLINKLNIIELINLDILMKTSILRENINMIKKCIEYGINVDDYMKFAVDYSICITKKLIELGGNIPDDICIYNPYHSLSIESIDIILENNYDSLENLLLKIINQNKETLYIDEILHIMGKLISTNKPIPDLNKILIKSCYYSDNIYKEIIKLDLNLDNYQQIFVNIMRKEYDNIEQLIFFSTYYNSIELLFVVVLSENIDLFKLLLEINCNDTDYLSWAFVFSGRCFKLMKYIVDNYNVDIYQRQIEVCIMIPKKDYQTKRYLQLMGYEISCIYNTECNNDKLPLVEFMKELSIDSTIRP.

ANK repeat units follow at residues 61-97 (YGNT…DYEF), 228-250 (FDNE…YIVE), 251-282 (KGFY…NLTD), 345-374 (NLDI…NVDD), and 517-546 (NSIE…NDTD).

The polypeptide is Putative ankyrin repeat protein L767 (Acanthamoeba polyphaga mimivirus (APMV)).